The primary structure comprises 547 residues: Chaperonin GroEL (547 aa).

Residues 30–33 (TLGP), Lys-51, 87–91 (DGTTT), Gly-415, 479–481 (NAA), and Asp-495 contribute to the ATP site.

Belongs to the chaperonin (HSP60) family. As to quaternary structure, forms a cylinder of 14 subunits composed of two heptameric rings stacked back-to-back. Interacts with the co-chaperonin GroES.

It is found in the cytoplasm. The catalysed reaction is ATP + H2O + a folded polypeptide = ADP + phosphate + an unfolded polypeptide.. Its function is as follows. Together with its co-chaperonin GroES, plays an essential role in assisting protein folding. The GroEL-GroES system forms a nano-cage that allows encapsulation of the non-native substrate proteins and provides a physical environment optimized to promote and accelerate protein folding. The sequence is that of Chaperonin GroEL from Pseudomonas putida (strain GB-1).